Here is a 234-residue protein sequence, read N- to C-terminus: MARNGPPGRGRSSLPFCLSRGVNCGQSRGMTQPDYQLEAALAAQGHIRIAGVDEVGRGPLAGPVVAAAVVLDPGAIPEGLNDSKKLTAARRERLYDILHANAQVSIAEASVEEIDALNILRASHLAMERAVAALNPAPDFLLIDGNLIPAGLSCPAEAVIKGDGRSVSIAAASIVAKTWRDRLMVDLAQQHPGYGWERNAGYPTKEHRSALQNLGVTPHHRRSFKTVHKILYQE.

Residues 47-234 enclose the RNase H type-2 domain; the sequence is IRIAGVDEVG…KTVHKILYQE (188 aa). Residues D53, E54, and D144 each coordinate a divalent metal cation.

It belongs to the RNase HII family. It depends on Mn(2+) as a cofactor. The cofactor is Mg(2+).

The protein resides in the cytoplasm. The catalysed reaction is Endonucleolytic cleavage to 5'-phosphomonoester.. In terms of biological role, endonuclease that specifically degrades the RNA of RNA-DNA hybrids. In Ruegeria pomeroyi (strain ATCC 700808 / DSM 15171 / DSS-3) (Silicibacter pomeroyi), this protein is Ribonuclease HII.